Here is a 339-residue protein sequence, read N- to C-terminus: Arylacetonitrilase (339 aa).

One can recognise a CN hydrolase domain in the interval 5-290 (IRVAVTQAEP…EGIVYADLDL (286 aa)). Glu-45 functions as the Proton acceptor in the catalytic mechanism. Lys-126 is an active-site residue. Cys-167 functions as the Nucleophile in the catalytic mechanism.

It belongs to the carbon-nitrogen hydrolase superfamily. Nitrilase family.

It carries out the reaction a nitrile + 2 H2O = a carboxylate + NH4(+). The catalysed reaction is 4-chlorophenylacetonitrile + 2 H2O = 4-chlorophenylacetate + NH4(+). Nitrilase that hydrolyzes preferentially phenylacetonitrile, (R,S)-mandelonitrile, and 3-indolylacetonitrile. The chain is Arylacetonitrilase from Fusarium vanettenii (strain ATCC MYA-4622 / CBS 123669 / FGSC 9596 / NRRL 45880 / 77-13-4) (Fusarium solani subsp. pisi).